Here is a 269-residue protein sequence, read N- to C-terminus: Mitochondrial scaffolding protein 1 (269 aa).

The PDZ domain maps to 49-121 (VVEIEKTSKG…HDEAVEVFRS (73 aa)). The disordered stretch occupies residues 143-185 (RTQTPTASVSITPQVTPQTRSTQNNTDTPKSMSHSESKSRLTS). Polar residues predominate over residues 145-174 (QTPTASVSITPQVTPQTRSTQNNTDTPKSM). Residues 240–262 (WLTEALYVSIGLGALTISGYLAY) traverse the membrane as a helical segment.

The protein localises to the membrane. Plays a role in the regulation of lifespan in a partially daf-16-mediated manner, and may be involved in regulating the levels of reactive oxygen species production in response to heat stress. This is Mitochondrial scaffolding protein 1 from Caenorhabditis elegans.